Reading from the N-terminus, the 144-residue chain is 3-dehydroquinate dehydratase (144 aa).

Catalysis depends on tyrosine 22, which acts as the Proton acceptor. Substrate contacts are provided by asparagine 71, histidine 77, and aspartate 84. The Proton donor role is filled by histidine 97. Substrate-binding positions include 98–99 (IS) and arginine 108.

It belongs to the type-II 3-dehydroquinase family. In terms of assembly, homododecamer.

The catalysed reaction is 3-dehydroquinate = 3-dehydroshikimate + H2O. It functions in the pathway metabolic intermediate biosynthesis; chorismate biosynthesis; chorismate from D-erythrose 4-phosphate and phosphoenolpyruvate: step 3/7. Catalyzes a trans-dehydration via an enolate intermediate. This chain is 3-dehydroquinate dehydratase (aroQ), found in Thermotoga maritima (strain ATCC 43589 / DSM 3109 / JCM 10099 / NBRC 100826 / MSB8).